Consider the following 171-residue polypeptide: Ribosome maturation factor RimP (171 aa).

This sequence belongs to the RimP family.

The protein resides in the cytoplasm. Its function is as follows. Required for maturation of 30S ribosomal subunits. This is Ribosome maturation factor RimP from Anaeromyxobacter sp. (strain Fw109-5).